The following is a 411-amino-acid chain: Alpha-galactosidase (411 aa).

An N-terminal signal peptide occupies residues 1–24; sequence MATHYSIIGGMIIVVLLMIIGSEG. The propeptide occupies 25 to 47; it reads GRLLEKKNRTSAEAEHYNVRRYL. N-linked (GlcNAc...) asparagine glycosylation occurs at asparagine 32. Cysteines 68 and 100 form a disulfide. The N-linked (GlcNAc...) asparagine glycan is linked to asparagine 145. Cysteine 148 and cysteine 179 are joined by a disulfide. The active-site Nucleophile is aspartate 177. Residue 210–214 coordinates substrate; sequence EWGWE. The active-site Proton donor is the aspartate 232. Residue asparagine 352 is glycosylated (N-linked (GlcNAc...) asparagine).

Belongs to the glycosyl hydrolase 27 family.

It catalyses the reaction Hydrolysis of terminal, non-reducing alpha-D-galactose residues in alpha-D-galactosides, including galactose oligosaccharides, galactomannans and galactolipids.. Functionally, involved in the hydrolysis of the galactomannan, it splits alpha-linked galactose moieties. It is particularly suitable for the hydrolysis of guar gum to a gum with improved gelling properties. Preferentially cleaves alpha-1,6 glycoside linkages. The sequence is that of Alpha-galactosidase from Cyamopsis tetragonoloba (Guar).